Reading from the N-terminus, the 211-residue chain is ATP-dependent Clp protease proteolytic subunit (211 aa).

Ser-107 acts as the Nucleophile in catalysis. His-132 is a catalytic residue.

This sequence belongs to the peptidase S14 family. In terms of assembly, fourteen ClpP subunits assemble into 2 heptameric rings which stack back to back to give a disk-like structure with a central cavity, resembling the structure of eukaryotic proteasomes.

It is found in the cytoplasm. The catalysed reaction is Hydrolysis of proteins to small peptides in the presence of ATP and magnesium. alpha-casein is the usual test substrate. In the absence of ATP, only oligopeptides shorter than five residues are hydrolyzed (such as succinyl-Leu-Tyr-|-NHMec, and Leu-Tyr-Leu-|-Tyr-Trp, in which cleavage of the -Tyr-|-Leu- and -Tyr-|-Trp bonds also occurs).. Cleaves peptides in various proteins in a process that requires ATP hydrolysis. Has a chymotrypsin-like activity. Plays a major role in the degradation of misfolded proteins. This Xanthobacter autotrophicus (strain ATCC BAA-1158 / Py2) protein is ATP-dependent Clp protease proteolytic subunit.